The following is a 211-amino-acid chain: MRFVFLGPPGAGKGTLAGEISGRCGVVHISTGGILRAAIQKQTALGKKVQKVVEVGGLVDDQTVTELVRERVSHEDVVSGFILDGFPRTVTQARCLEDIVPIDYAVSIVVPDDVLVARLTGRRVCSACGSSYHVLFAQPKREGVCDRCRGVLVVREDDKMSAILQRLTAYRAQAEPIVHFYSERGKLVSLNGAPPISDVVLEFQERFAQSR.

Position 10-15 (10-15 (GAGKGT)) interacts with ATP. Residues 30 to 59 (STGGILRAAIQKQTALGKKVQKVVEVGGLV) are NMP. AMP-binding positions include threonine 31, arginine 36, 57 to 59 (GLV), 85 to 88 (GFPR), and glutamine 92. Residues 121-158 (GRRVCSACGSSYHVLFAQPKREGVCDRCRGVLVVREDD) form an LID region. Arginine 122 lines the ATP pocket. 2 residues coordinate Zn(2+): cysteine 125 and cysteine 128. 131-132 (SY) provides a ligand contact to ATP. Zn(2+)-binding residues include cysteine 145 and cysteine 148. The AMP site is built by arginine 155 and arginine 166. Residue proline 194 participates in ATP binding.

It belongs to the adenylate kinase family. In terms of assembly, monomer.

It localises to the cytoplasm. The catalysed reaction is AMP + ATP = 2 ADP. Its pathway is purine metabolism; AMP biosynthesis via salvage pathway; AMP from ADP: step 1/1. Catalyzes the reversible transfer of the terminal phosphate group between ATP and AMP. Plays an important role in cellular energy homeostasis and in adenine nucleotide metabolism. The sequence is that of Adenylate kinase from Treponema pallidum (strain Nichols).